The primary structure comprises 197 residues: CASP-like protein 0U1 (197 aa).

Residues 1–13 (MDDFDPTVTNSPK) lie on the Cytoplasmic side of the membrane. Residues 14–34 (FRLIAVQCLFSITAFAAMLSQ) form a helical membrane-spanning segment. The Extracellular segment spans residues 35-63 (RHGLAGPDEMTLEECGPQACGYQKFSNFK). Residues 64–84 (FLIAVCIIYAVFSLVVMAAYL) traverse the membrane as a helical segment. The Cytoplasmic portion of the chain corresponds to 85-99 (LQRVPPPVTELTAYT). A helical transmembrane segment spans residues 100–120 (VMNVLLFAAFAMSATSCNITI). The Extracellular segment spans residues 121 to 135 (VDPVYPVCKRATSAK). Residues 136-156 (ASIAFAFFTWLAVCFSMLFTY) form a helical membrane-spanning segment. Over 157 to 197 (KEWRDVDYHVPGSGAYEFVPGVTSGSSRSSYPPQASSSSYA) the chain is Cytoplasmic. The interval 178-197 (VTSGSSRSSYPPQASSSSYA) is disordered. Residues 180–197 (SGSSRSSYPPQASSSSYA) show a composition bias toward low complexity.

This sequence belongs to the Casparian strip membrane proteins (CASP) family. Homodimer and heterodimers.

Its subcellular location is the cell membrane. In Micromonas commoda (strain RCC299 / NOUM17 / CCMP2709) (Picoplanktonic green alga), this protein is CASP-like protein 0U1.